The sequence spans 183 residues: Regulatory protein RecX (183 aa).

Residues M1–S12 are compositionally biased toward polar residues. The tract at residues M1–A26 is disordered.

It belongs to the RecX family.

It is found in the cytoplasm. Modulates RecA activity. The sequence is that of Regulatory protein RecX from Mycobacterium sp. (strain JLS).